The primary structure comprises 578 residues: Isocitrate dehydrogenase kinase/phosphatase (578 aa).

ATP contacts are provided by residues 315 to 321 (APGIRGM) and K336. D371 is a catalytic residue.

Belongs to the AceK family.

It is found in the cytoplasm. It catalyses the reaction L-seryl-[isocitrate dehydrogenase] + ATP = O-phospho-L-seryl-[isocitrate dehydrogenase] + ADP + H(+). In terms of biological role, bifunctional enzyme which can phosphorylate or dephosphorylate isocitrate dehydrogenase (IDH) on a specific serine residue. This is a regulatory mechanism which enables bacteria to bypass the Krebs cycle via the glyoxylate shunt in response to the source of carbon. When bacteria are grown on glucose, IDH is fully active and unphosphorylated, but when grown on acetate or ethanol, the activity of IDH declines drastically concomitant with its phosphorylation. The chain is Isocitrate dehydrogenase kinase/phosphatase from Escherichia coli O157:H7.